A 101-amino-acid polypeptide reads, in one-letter code: Integration host factor subunit alpha (101 aa).

The protein belongs to the bacterial histone-like protein family. As to quaternary structure, heterodimer of an alpha and a beta chain.

This protein is one of the two subunits of integration host factor, a specific DNA-binding protein that functions in genetic recombination as well as in transcriptional and translational control. The protein is Integration host factor subunit alpha of Alkalilimnicola ehrlichii (strain ATCC BAA-1101 / DSM 17681 / MLHE-1).